Here is a 353-residue protein sequence, read N- to C-terminus: MTIALGRFTKEEKDLFDIMDDWLRRDRFVFVGWSGLLLFPCAYFALGGWFTGTTFVTSWYTHGLASSYLEGCNFLTAAVSTPANSLAHSLLLLWGPEAQGDFTRWCQLGGLWTFVALHGAFGLIGFMLRQFELARSVQLRPYNAIAFSAPIAVFVSVFLIYPLGQSGWFFAPSFGVAAIFRFILFFQGFHNWTLNPFHMMGVAGVLGAALLCAIHGATVENTLFEDGDGANTFRAFNPTQAEETYSMVTANRFWSQIFGVAFSNKRWLHFFMLFVPVTGLWMSALGVVGLALNLRAYDFVSQEIRAAEDPEFETFYTKNLLLNEGIRAWMAAQDQPHENLIFPEEVLPRGNAL.

T2 carries the post-translational modification N-acetylthreonine. Position 2 is a phosphothreonine (T2). The chain crosses the membrane as a helical span at residues 41-61; sequence CAYFALGGWFTGTTFVTSWYT. Residue H118 participates in chlorophyll a binding. A helical transmembrane segment spans residues 125-141; sequence GFMLRQFELARSVQLRP. Q130 and N143 together coordinate pheophytin a. The helical transmembrane segment at 153–166 threads the bilayer; it reads VFVSVFLIYPLGQS. Chlorophyll a is bound at residue H198. The chain crosses the membrane as a helical span at residues 208 to 228; the sequence is AALLCAIHGATVENTLFEDGD. A plastoquinone contacts are provided by H215 and F262. H215 provides a ligand contact to Fe cation. H269 contacts Fe cation. The helical transmembrane segment at 279 to 295 threads the bilayer; that stretch reads GLWMSALGVVGLALNLR.

It belongs to the reaction center PufL/M/PsbA/D family. PSII is composed of 1 copy each of membrane proteins PsbA, PsbB, PsbC, PsbD, PsbE, PsbF, PsbH, PsbI, PsbJ, PsbK, PsbL, PsbM, PsbT, PsbX, PsbY, PsbZ, Psb30/Ycf12, at least 3 peripheral proteins of the oxygen-evolving complex and a large number of cofactors. It forms dimeric complexes. The D1/D2 heterodimer binds P680, chlorophylls that are the primary electron donor of PSII, and subsequent electron acceptors. It shares a non-heme iron and each subunit binds pheophytin, quinone, additional chlorophylls, carotenoids and lipids. There is also a Cl(-1) ion associated with D1 and D2, which is required for oxygen evolution. The PSII complex binds additional chlorophylls, carotenoids and specific lipids. serves as cofactor.

It is found in the plastid. It localises to the chloroplast thylakoid membrane. It carries out the reaction 2 a plastoquinone + 4 hnu + 2 H2O = 2 a plastoquinol + O2. Photosystem II (PSII) is a light-driven water:plastoquinone oxidoreductase that uses light energy to abstract electrons from H(2)O, generating O(2) and a proton gradient subsequently used for ATP formation. It consists of a core antenna complex that captures photons, and an electron transfer chain that converts photonic excitation into a charge separation. The D1/D2 (PsbA/PsbD) reaction center heterodimer binds P680, the primary electron donor of PSII as well as several subsequent electron acceptors. D2 is needed for assembly of a stable PSII complex. The polypeptide is Photosystem II D2 protein (Ceratophyllum demersum (Rigid hornwort)).